We begin with the raw amino-acid sequence, 573 residues long: Dihydroxy-acid dehydratase (573 aa).

Positions 1–14 are enriched in basic and acidic residues; the sequence is MTEKSPKPHKRSDA. The segment at 1-21 is disordered; the sequence is MTEKSPKPHKRSDAITEGPNR. Residue C55 coordinates [2Fe-2S] cluster. Mg(2+) is bound at residue D87. C128 provides a ligand contact to [2Fe-2S] cluster. 2 residues coordinate Mg(2+): D129 and K130. K130 bears the N6-carboxylysine mark. C200 contacts [2Fe-2S] cluster. E450 contacts Mg(2+). Catalysis depends on S476, which acts as the Proton acceptor.

It belongs to the IlvD/Edd family. Homodimer. Requires [2Fe-2S] cluster as cofactor. Mg(2+) is required as a cofactor.

It carries out the reaction (2R)-2,3-dihydroxy-3-methylbutanoate = 3-methyl-2-oxobutanoate + H2O. The catalysed reaction is (2R,3R)-2,3-dihydroxy-3-methylpentanoate = (S)-3-methyl-2-oxopentanoate + H2O. Its pathway is amino-acid biosynthesis; L-isoleucine biosynthesis; L-isoleucine from 2-oxobutanoate: step 3/4. It participates in amino-acid biosynthesis; L-valine biosynthesis; L-valine from pyruvate: step 3/4. Functions in the biosynthesis of branched-chain amino acids. Catalyzes the dehydration of (2R,3R)-2,3-dihydroxy-3-methylpentanoate (2,3-dihydroxy-3-methylvalerate) into 2-oxo-3-methylpentanoate (2-oxo-3-methylvalerate) and of (2R)-2,3-dihydroxy-3-methylbutanoate (2,3-dihydroxyisovalerate) into 2-oxo-3-methylbutanoate (2-oxoisovalerate), the penultimate precursor to L-isoleucine and L-valine, respectively. The sequence is that of Dihydroxy-acid dehydratase from Koribacter versatilis (strain Ellin345).